The following is a 421-amino-acid chain: Solute carrier family 35 member F3 (421 aa).

The interval 25–45 (EGEERPRDSPGPAEAQAPAGV) is disordered. A run of 10 helical transmembrane segments spans residues 66-86 (IFWG…STQL), 98-118 (FTLT…YYVG), 149-169 (VFFT…YLYL), 179-199 (DVSV…WIVL), 208-228 (IVAA…DGFH), 232-252 (VIGI…KVLF), 266-286 (LFLS…PIIL), 305-325 (LCGF…GIAV), 326-346 (TYPT…AVID), and 352-372 (IVFN…FLLL). A disordered region spans residues 393-421 (KKEEPAEGAADLSSGPQSKNRRARPSFAR). Basic residues predominate over residues 411–421 (KNRRARPSFAR).

The protein belongs to the SLC35F solute transporter family. In terms of tissue distribution, expressed at the highest levels in the adult cerebellum.

The protein resides in the membrane. It catalyses the reaction thiamine(in) = thiamine(out). Mediates thiamine transport. This chain is Solute carrier family 35 member F3, found in Homo sapiens (Human).